Consider the following 333-residue polypeptide: MLVGTPNLLTLDEADATWTLIKDKVIEEHFGPNAVAVPFLSDAACYDLLGVLVKQSRPAHTRLALPGRQGRRALKPVGPLPSLLEQAGSEGAFAHCTREYSPNGRAERAYEETRMLDGQPCKIRLHMGDLRKKVAFLLLPPGQVSLQQTLPWLRSTHSIYVIYQVFSCSWLQLGLTSTAREPQLLRLLRSLPVAFSCLKFSLQSKGVLGPQKPLTKDPLPHGANWVRPNLSIMPPLAPTSAPADTTEAADVPPPVPAPPTPPPQEGPEDKPTRFSYKGRNPFWRGPQILSENWLFSPRSPPPGAQGGGPRDPDGHSMSLPLLQGLSSEFDSDD.

The segment at 234 to 333 (PPLAPTSAPA…GLSSEFDSDD (100 aa)) is disordered. Positions 251–265 (VPPPVPAPPTPPPQE) are enriched in pro residues. The segment covering 324–333 (GLSSEFDSDD) has biased composition (polar residues).

The protein resides in the cell projection. Its subcellular location is the cilium. It is found in the flagellum. This is an uncharacterized protein from Homo sapiens (Human).